A 415-amino-acid chain; its full sequence is Phosphoglycerate kinase (415 aa).

Substrate is bound by residues 24–26 (DLN), R43, 66–69 (HLGR), R125, and R165. Residues K215, G303, E334, and 363 to 366 (GGDS) each bind ATP.

It belongs to the phosphoglycerate kinase family. As to quaternary structure, monomer.

The protein resides in the cytoplasm. The catalysed reaction is (2R)-3-phosphoglycerate + ATP = (2R)-3-phospho-glyceroyl phosphate + ADP. The protein operates within carbohydrate degradation; glycolysis; pyruvate from D-glyceraldehyde 3-phosphate: step 2/5. In Mycobacterium avium (strain 104), this protein is Phosphoglycerate kinase.